The following is a 207-amino-acid chain: Protein Nef (207 aa).

A lipid anchor (N-myristoyl glycine; by host) is attached at Gly2. Ser6 bears the Phosphoserine; by host mark. The tract at residues 62-66 (EEEEE) is acidic; interacts with host PACS1 and PACS2; stabilizes the interaction of NEF/MHC-I with host AP1M1; necessary for MHC-I internalization. The SH3-binding; interaction with Src family tyrosine kinases stretch occupies residues 70-79 (PVRPQVPLRP). Residues 73–76 (PQVP) carry the PxxP; stabilizes the interaction of NEF/MHC-I with host AP1M1; necessary for MHC-I internalization motif. The tract at residues 109–125 (EILDLWVYNTQGFFPDW) is mediates dimerization, Nef-PTE1 interaction. Residues 149 to 181 (VDPSEVEEINEGENNCLLHPASLHGMEDEDREV) are binding to ATP6V1H. Positions 165 to 166 (LL) match the Dileucine internalization motif; necessary for CD4 internalization motif. The short motif at 175–176 (ED) is the Diacidic; necessary for CD4 internalization element.

Belongs to the lentivirus primate group Nef protein family. Monomer; cytosolic form. Homodimer; membrane bound form. Interacts with Nef associated p21-activated kinase (PAK2); this interaction activates PAK2. Associates with the Nef-MHC-I-AP1 complex; this complex is required for MHC-I internalization. Interacts (via C-terminus) with host PI3-kinase. Interacts with host PACS1; this interaction seems to be weak. Interacts with host PACS2. Interacts with host LCK and MAPK3; these interactions inhibit the kinase activity of the latter. Interacts with host ATP6V1H; this interaction may play a role in CD4 endocytosis. Associates with the CD4-Nef-AP2 complex; this complex is required for CD4 internalization. Interacts with host AP2 subunit alpha and AP2 subunit sigma2. Interacts with TCR-zeta chain; this interaction up-regulates the Fas ligand (FasL) surface expression. Interacts with host HCK, LYN, and SRC; these interactions activate the Src family kinases. Interacts with MAP3K5; this interaction inhibits the Fas and TNFR-mediated death signals. Interacts with beta-COP and PTE1. Interacts with human RACK1; this increases Nef phosphorylation by PKC. Interacts with TP53; this interaction decreases the half-life of TP53, protecting the infected cell against p53-mediated apoptosis. In terms of processing, the virion-associated Nef proteins are cleaved by the viral protease to release the soluble C-terminal core protein. Nef is probably cleaved concomitantly with viral structural proteins on maturation of virus particles. Post-translationally, myristoylated. Phosphorylated on serine residues, probably by host PKCdelta and theta.

The protein localises to the host cell membrane. Its subcellular location is the virion. It is found in the secreted. The protein resides in the host Golgi apparatus membrane. Functionally, factor of infectivity and pathogenicity, required for optimal virus replication. Alters numerous pathways of T-lymphocyte function and down-regulates immunity surface molecules in order to evade host defense and increase viral infectivity. Alters the functionality of other immunity cells, like dendritic cells, monocytes/macrophages and NK cells. In infected CD4(+) T-lymphocytes, down-regulates the surface MHC-I, mature MHC-II, CD4, CD28, CCR5 and CXCR4 molecules. Mediates internalization and degradation of host CD4 through the interaction of with the cytoplasmic tail of CD4, the recruitment of AP-2 (clathrin adapter protein complex 2), internalization through clathrin coated pits, and subsequent transport to endosomes and lysosomes for degradation. Diverts host MHC-I molecules to the trans-Golgi network-associated endosomal compartments by an endocytic pathway to finally target them for degradation. MHC-I down-regulation may involve AP-1 (clathrin adapter protein complex 1) or possibly Src family kinase-ZAP70/Syk-PI3K cascade recruited by PACS2. In consequence infected cells are masked for immune recognition by cytotoxic T-lymphocytes. Decreasing the number of immune receptors also prevents reinfection by more HIV particles (superinfection). Down-regulates host SERINC3 and SERINC5 thereby excluding these proteins from the viral particles. Virion infectivity is drastically higher when SERINC3 or SERINC5 are excluded from the viral envelope, because these host antiviral proteins impair the membrane fusion event necessary for subsequent virion penetration. In terms of biological role, bypasses host T-cell signaling by inducing a transcriptional program nearly identical to that of anti-CD3 cell activation. Interaction with TCR-zeta chain up-regulates the Fas ligand (FasL). Increasing surface FasL molecules and decreasing surface MHC-I molecules on infected CD4(+) cells send attacking cytotoxic CD8+ T-lymphocytes into apoptosis. Its function is as follows. Plays a role in optimizing the host cell environment for viral replication without causing cell death by apoptosis. Protects the infected cells from apoptosis in order to keep them alive until the next virus generation is ready to strike. Inhibits the Fas and TNFR-mediated death signals by blocking MAP3K5/ASK1. Decreases the half-life of TP53, protecting the infected cell against p53-mediated apoptosis. Inhibits the apoptotic signals regulated by the Bcl-2 family proteins through the formation of a Nef/PI3-kinase/PAK2 complex that leads to activation of PAK2 and induces phosphorylation of host BAD. Functionally, extracellular Nef protein targets CD4(+) T-lymphocytes for apoptosis by interacting with CXCR4 surface receptors. The sequence is that of Protein Nef from Homo sapiens (Human).